Here is a 339-residue protein sequence, read N- to C-terminus: Serpentine receptor class alpha-24 (339 aa).

The next 7 membrane-spanning stretches (helical) occupy residues 26 to 46 (ITVK…YYFA), 65 to 82 (LILL…TTML), 112 to 132 (ELFV…SLAF), 151 to 171 (VSIF…YVGL), 199 to 219 (FRTL…YLSV), 248 to 268 (VCIL…GVNY), and 284 to 304 (LAPF…VIHC).

This sequence belongs to the nematode receptor-like protein sra family.

The protein resides in the membrane. The polypeptide is Serpentine receptor class alpha-24 (sra-24) (Caenorhabditis elegans).